A 160-amino-acid polypeptide reads, in one-letter code: Variant surface antigen C (160 aa).

A signal peptide spans 1–29 (MKKSIFSKKLLVSFGSLVALASIPLIAIS). Cys-30 is lipidated: N-palmitoyl cysteine. Cys-30 is lipidated: S-diacylglycerol cysteine. Residues 32 to 160 (QTNTDKSQQP…SSESGSQKTT (129 aa)) are disordered. Composition is skewed to low complexity over residues 38–54 (SQQPGSGSSTSGDQSGT) and 62–87 (SGTSTSGGQSGTTSGSGTTTGEQTET). 6 repeat units span residues 86–97 (ETAPKSPESGSQ), 98–109 (EATPKSPESGSQ), 110–121 (EATPKSPESGSQ), 122–133 (EAAPKSSESGSQ), 134–145 (EAAPKSSESGSQ), and 146–157 (EAAPKSSESGSQ). The segment at 86 to 157 (ETAPKSPESG…APKSSESGSQ (72 aa)) is 6 X 12 AA tandem repeats. The span at 93–160 (ESGSQEATPK…SSESGSQKTT (68 aa)) shows a compositional bias: polar residues.

The protein resides in the cell membrane. Functionally, responsible for the antigenic diversity for host adaptation. The protein is Variant surface antigen C (vlpC) of Mesomycoplasma hyorhinis (Mycoplasma hyorhinis).